The following is a 318-amino-acid chain: Ubiquitin-like domain-containing CTD phosphatase 1 (318 aa).

Residues 3–81 (LSLIIKWGGQ…IMMMGTREES (79 aa)) form the Ubiquitin-like domain. Residues 133–294 (PREGKKLLVL…LKLSQYLKEI (162 aa)) form the FCP1 homology domain. Mg(2+) is bound by residues Asp-143, Asp-145, and Asp-253.

Mg(2+) is required as a cofactor.

The protein localises to the nucleus. The enzyme catalyses O-phospho-L-seryl-[protein] + H2O = L-seryl-[protein] + phosphate. The catalysed reaction is O-phospho-L-threonyl-[protein] + H2O = L-threonyl-[protein] + phosphate. Functionally, dephosphorylates 26S nuclear proteasomes, thereby decreasing their proteolytic activity. Recruited to the 19S regulatory particle of the 26S proteasome where it dephosphorylates 19S component psmc2 which impairs psmc2 ATPase activity and disrupts 26S proteasome assembly. Has also been reported to stimulate the proteolytic activity of the 26S proteasome. In Xenopus tropicalis (Western clawed frog), this protein is Ubiquitin-like domain-containing CTD phosphatase 1 (ublcp1).